We begin with the raw amino-acid sequence, 307 residues long: Lipid droplet-associated hydrolase (307 aa).

Catalysis depends on Ser-119, which acts as the Nucleophile. Residues 157 to 200 (GWVFTKVAMPLYSVFGYIFFSFFNFLPVWLRLMLIQIYFLIFSI) form a potential amphipathic helix required for binding to lipid droplets region. 2 consecutive transmembrane segments (helical) span residues 166–186 (PLYS…PVWL) and 188–208 (LMLI…LGTA). Residues Asp-254 and His-283 each act as charge relay system in the active site.

This sequence belongs to the AB hydrolase superfamily. LDAH family. Interacts with the juvenile hormone hydrolase enzymes Jheh1 and Jheh2. Also interacts with Hmu, Cpr, Gp93 and Pvr. As to expression, expressed in accessory glands.

Its subcellular location is the lipid droplet. The protein localises to the endoplasmic reticulum membrane. The catalysed reaction is a cholesterol ester + H2O = cholesterol + a fatty acid + H(+). In terms of biological role, probable serine lipid hydrolase associated with lipid droplets. Appears to lack or have very low cholesterol esterase activity. Appears to lack triglyceride lipase activity. Involved in cholesterol and triglyceride homeostasis; stimulates cellular triglyceride accumulation and cellular cholesterol release. Involved in negatively regulating juvenile hormone (JH) and possibly, insulin signaling activities such as triacylglycerols (TAG) storage, and thereby plays a role in the endocrine regulation of organismal growth and survival. Likely functions by enhancing the activity of the JH hydrolase enzymes Jheh1 and Jheh2. Required for lipid droplet positioning and fat storage. The sequence is that of Lipid droplet-associated hydrolase from Drosophila melanogaster (Fruit fly).